A 20-amino-acid chain; its full sequence is METTNESLGYTDQIIGPVLD.

Residues 1 to 10 (METTNESLGY) show a composition bias toward polar residues. Residues 1–20 (METTNESLGYTDQIIGPVLD) form a disordered region.

The protein belongs to the ATPase alpha/beta chains family. In terms of assembly, F-type ATPases have 2 components, CF(1) - the catalytic core - and CF(0) - the membrane proton channel. CF(1) has five subunits: alpha(3), beta(3), gamma(1), delta(1), epsilon(1). CF(0) has four main subunits: a(1), b(1), b'(1) and c(9-12).

It localises to the plastid. It is found in the chloroplast thylakoid membrane. It carries out the reaction ATP + H2O + 4 H(+)(in) = ADP + phosphate + 5 H(+)(out). Its function is as follows. Produces ATP from ADP in the presence of a proton gradient across the membrane. The catalytic sites are hosted primarily by the beta subunits. This Chattonella marina var. antiqua (Red tide flagellate) protein is ATP synthase subunit beta, chloroplastic.